Consider the following 199-residue polypeptide: Thymidine kinase (199 aa).

ATP is bound by residues 15–22 (GSMFSGKS) and 88–91 (DEVQ). Glu-89 serves as the catalytic Proton acceptor. Residues Cys-145, Cys-148, Cys-183, and His-186 each coordinate Zn(2+).

The protein belongs to the thymidine kinase family. Homotetramer.

It is found in the cytoplasm. The enzyme catalyses thymidine + ATP = dTMP + ADP + H(+). The protein is Thymidine kinase of Staphylococcus epidermidis (strain ATCC 12228 / FDA PCI 1200).